A 194-amino-acid chain; its full sequence is Large ribosomal subunit protein eL15 (194 aa).

The tract at residues 164-194 (SAGKKGRGLRNKGKGAEKVRPSVRANKGKTK) is disordered. Positions 167 to 176 (KKGRGLRNKG) are enriched in basic residues.

The protein belongs to the eukaryotic ribosomal protein eL15 family.

This is Large ribosomal subunit protein eL15 from Thermococcus gammatolerans (strain DSM 15229 / JCM 11827 / EJ3).